The following is a 615-amino-acid chain: MSESERSEASEVFGTSPDSRLSSEDAAELEQLRREAAILREQLEDAGGLATSARAARDVHQLEARIDSLAARNAKLMDTLKEARQQLLALREEVDRLGQPPSGYGVLLSVQDDETVDVFTSGRKMRLTCSPNIETKELKKGQTVRLNEALTVVEAGHFESVGEISTLREILSDGHRALVVGHADEERIVWLAEPLVAAEHLPEGSYADEDDLTDDRPRKLRPGDSLLVDTKAGYAFERIPKAEVEDLVLEEVPDVSYNDIGGLGRQIEQIRDAVELPFLHKELYREYSLRPPKGVLLYGPPGCGKTLIAKAVANSLAKKMAEVRGDDAREAKSYFLNIKGPELLNKFVGETERHIRLIFQRAREKASEGTPVIVFFDEMDSIFRTRGTGVSSDVETTVVPQLLSEIDGVEGLENVIVIGASNREDMIDPAILRPGRLDVKIKIERPDAESAQDIFSKYLTEELPIHDDDLAEFSGDRSLTIKAMIEKVVDRMYAEIDDNRFLEVTYANGDKEVMYFKDFNSGAMIQNVVDRAKKNAIKAVLETGQRGLRIQHLLDSIIDEFAENEDLPNTTNPDDWARISGKKGERIVYIRTLVTGKSSSASRAIDTESNLGQYL.

Residues methionine 1–alanine 27 are disordered. A coiled-coil region spans residues serine 22–glutamine 99. Glycine 302 to leucine 307 is an ATP binding site. The interval tyrosine 614–leucine 615 is docks into pockets in the proteasome alpha-ring.

This sequence belongs to the AAA ATPase family. As to quaternary structure, homohexamer. Assembles into a hexameric ring structure that caps the 20S proteasome core. Strongly interacts with the prokaryotic ubiquitin-like protein Pup through a hydrophobic interface; the interacting region of ARC lies in its N-terminal coiled-coil domain. There is one Pup binding site per ARC hexamer ring. Upon ATP-binding, the C-terminus of ARC interacts with the alpha-rings of the proteasome core, possibly by binding to the intersubunit pockets.

Its pathway is protein degradation; proteasomal Pup-dependent pathway. In terms of biological role, ATPase which is responsible for recognizing, binding, unfolding and translocation of pupylated proteins into the bacterial 20S proteasome core particle. May be essential for opening the gate of the 20S proteasome via an interaction with its C-terminus, thereby allowing substrate entry and access to the site of proteolysis. Thus, the C-termini of the proteasomal ATPase may function like a 'key in a lock' to induce gate opening and therefore regulate proteolysis. The polypeptide is Proteasome-associated ATPase (Mycolicibacterium vanbaalenii (strain DSM 7251 / JCM 13017 / BCRC 16820 / KCTC 9966 / NRRL B-24157 / PYR-1) (Mycobacterium vanbaalenii)).